The chain runs to 530 residues: Meiosis 1 arrest protein (530 aa).

The disordered stretch occupies residues 463–530; it reads LHPHWESRAP…SEWEKDPSRP (68 aa). Low complexity predominate over residues 503 to 516; sequence ASKMPAASKSSSDA.

The protein resides in the cytoplasm. Functionally, required for meiosis I progression during spermatogenesis. The sequence is that of Meiosis 1 arrest protein (M1AP) from Homo sapiens (Human).